The chain runs to 352 residues: UDP-N-acetylglucosamine--N-acetylmuramyl-(pentapeptide) pyrophosphoryl-undecaprenol N-acetylglucosamine transferase (352 aa).

Residues 14 to 16 (TGG), N124, R164, S185, and Q285 contribute to the UDP-N-acetyl-alpha-D-glucosamine site.

The protein belongs to the glycosyltransferase 28 family. MurG subfamily.

The protein localises to the cell inner membrane. It catalyses the reaction di-trans,octa-cis-undecaprenyl diphospho-N-acetyl-alpha-D-muramoyl-L-alanyl-D-glutamyl-meso-2,6-diaminopimeloyl-D-alanyl-D-alanine + UDP-N-acetyl-alpha-D-glucosamine = di-trans,octa-cis-undecaprenyl diphospho-[N-acetyl-alpha-D-glucosaminyl-(1-&gt;4)]-N-acetyl-alpha-D-muramoyl-L-alanyl-D-glutamyl-meso-2,6-diaminopimeloyl-D-alanyl-D-alanine + UDP + H(+). It functions in the pathway cell wall biogenesis; peptidoglycan biosynthesis. Cell wall formation. Catalyzes the transfer of a GlcNAc subunit on undecaprenyl-pyrophosphoryl-MurNAc-pentapeptide (lipid intermediate I) to form undecaprenyl-pyrophosphoryl-MurNAc-(pentapeptide)GlcNAc (lipid intermediate II). The polypeptide is UDP-N-acetylglucosamine--N-acetylmuramyl-(pentapeptide) pyrophosphoryl-undecaprenol N-acetylglucosamine transferase (Chlamydia trachomatis serovar L2 (strain ATCC VR-902B / DSM 19102 / 434/Bu)).